The sequence spans 556 residues: 2-succinyl-5-enolpyruvyl-6-hydroxy-3-cyclohexene-1-carboxylate synthase (556 aa).

This sequence belongs to the TPP enzyme family. MenD subfamily. Homodimer. Mg(2+) serves as cofactor. It depends on Mn(2+) as a cofactor. Thiamine diphosphate is required as a cofactor.

The enzyme catalyses isochorismate + 2-oxoglutarate + H(+) = 5-enolpyruvoyl-6-hydroxy-2-succinyl-cyclohex-3-ene-1-carboxylate + CO2. Its pathway is quinol/quinone metabolism; 1,4-dihydroxy-2-naphthoate biosynthesis; 1,4-dihydroxy-2-naphthoate from chorismate: step 2/7. It functions in the pathway quinol/quinone metabolism; menaquinone biosynthesis. Functionally, catalyzes the thiamine diphosphate-dependent decarboxylation of 2-oxoglutarate and the subsequent addition of the resulting succinic semialdehyde-thiamine pyrophosphate anion to isochorismate to yield 2-succinyl-5-enolpyruvyl-6-hydroxy-3-cyclohexene-1-carboxylate (SEPHCHC). The protein is 2-succinyl-5-enolpyruvyl-6-hydroxy-3-cyclohexene-1-carboxylate synthase of Escherichia fergusonii (strain ATCC 35469 / DSM 13698 / CCUG 18766 / IAM 14443 / JCM 21226 / LMG 7866 / NBRC 102419 / NCTC 12128 / CDC 0568-73).